We begin with the raw amino-acid sequence, 331 residues long: Flagellar P-ring protein (331 aa).

A signal peptide spans 1 to 22; the sequence is MRKVTIFIIIIVALTGFGSVRI.

This sequence belongs to the FlgI family. The basal body constitutes a major portion of the flagellar organelle and consists of four rings (L,P,S, and M) mounted on a central rod.

It localises to the periplasm. The protein localises to the bacterial flagellum basal body. Functionally, assembles around the rod to form the L-ring and probably protects the motor/basal body from shearing forces during rotation. The polypeptide is Flagellar P-ring protein (Pseudothermotoga lettingae (strain ATCC BAA-301 / DSM 14385 / NBRC 107922 / TMO) (Thermotoga lettingae)).